The sequence spans 243 residues: Undecaprenyl-phosphate mannosyltransferase (243 aa).

Belongs to the glycosyltransferase 2 family.

It catalyses the reaction di-trans,octa-cis-undecaprenyl phosphate + GDP-alpha-D-mannose = D-mannosyl di-trans,octa-cis-undecaprenyl phosphate + GDP. Functionally, catalyzes the transfer of mannose from GDP-mannose to D-mannosyl-1-phosphoundecaprenol. The chain is Undecaprenyl-phosphate mannosyltransferase from Micrococcus luteus (strain ATCC 4698 / DSM 20030 / JCM 1464 / CCM 169 / CCUG 5858 / IAM 1056 / NBRC 3333 / NCIMB 9278 / NCTC 2665 / VKM Ac-2230) (Micrococcus lysodeikticus).